The sequence spans 25 residues: GWASKIAQTLGKMAKVGLQELIQPK.

Expressed by the skin glands.

Its subcellular location is the secreted. Its function is as follows. Antimicrobial peptide. The sequence is that of Xenoposin precursor fragment BM3 from Xenopus boumbaensis (Mawa clawed frog).